The primary structure comprises 206 residues: FMN-dependent NADH:quinone oxidoreductase (206 aa).

Residues 15 to 17 (SVS), 94 to 97 (MYNF), and 138 to 141 (TRGG) each bind FMN.

Belongs to the azoreductase type 1 family. In terms of assembly, homodimer. The cofactor is FMN.

The enzyme catalyses 2 a quinone + NADH + H(+) = 2 a 1,4-benzosemiquinone + NAD(+). The catalysed reaction is N,N-dimethyl-1,4-phenylenediamine + anthranilate + 2 NAD(+) = 2-(4-dimethylaminophenyl)diazenylbenzoate + 2 NADH + 2 H(+). Functionally, quinone reductase that provides resistance to thiol-specific stress caused by electrophilic quinones. In terms of biological role, also exhibits azoreductase activity. Catalyzes the reductive cleavage of the azo bond in aromatic azo compounds to the corresponding amines. This is FMN-dependent NADH:quinone oxidoreductase from Sinorhizobium fredii (strain NBRC 101917 / NGR234).